Reading from the N-terminus, the 639-residue chain is Testicular spindle-associated protein SHCBP1L (639 aa).

2 disordered regions span residues 1-25 (MESD…EQTV) and 48-75 (VASP…ETCD). An O-acetylserine modification is found at Ser3. Phosphoserine is present on residues Ser8, Ser19, and Ser50. Positions 54 to 63 (VKGKAARRRL) are enriched in basic residues. Positions 285–312 (IAQRFKKTLEKYKNKRVELIEYQSNIKE) form a coiled coil. 4 PbH1 repeats span residues 479–500 (SGHL…CVLT), 501–523 (GASL…ELYP), 524–557 (GSIA…NMKV), and 560–582 (APKL…SILQ). Position 556 is an N6-acetyllysine (Lys556). The residue at position 631 (Lys631) is an N6-acetyllysine.

Interacts with HSPA2; this interaction may promote the recruitment of HSPA2 to the spindle. Expressed in pachytene spermatocytes and elongating spermatids inside the seminiferous tubules. Not detected in ovary (at protein level). Testis-specific.

It localises to the cytoplasm. Its subcellular location is the cytoskeleton. The protein resides in the spindle. In terms of biological role, testis-specific spindle-associated factor that plays a role in spermatogenesis. In association with HSPA2, participates in the maintenance of spindle integrity during meiosis in male germ cells. This chain is Testicular spindle-associated protein SHCBP1L, found in Mus musculus (Mouse).